A 576-amino-acid chain; its full sequence is M-phase inducer phosphatase 2 (576 aa).

Phosphoserine is present on Ser42. The segment covering 90–105 (RRTSECSLSSESSESS) has biased composition (low complexity). Positions 90-119 (RRTSECSLSSESSESSDAGLCMDSPSPVDP) are disordered. Position 167 is a phosphoserine; by MELK (Ser167). Phosphoserine is present on Ser248. Phosphoserine; by MELK and MAPK14 is present on Ser321. The disordered stretch occupies residues 338 to 358 (QDRDVPVQSKRRKSVTPLEEQ). Phosphoserine; by AURKA is present on Ser351. At Ser372 the chain carries Phosphoserine; by BRSK1 and MAPK14. The Rhodanese domain occupies 427 to 534 (IVEKFVIVDC…FFPQHPNFCE (108 aa)). Residue Cys483 is part of the active site. The residue at position 559 (Ser559) is a Phosphoserine.

It belongs to the MPI phosphatase family. As to quaternary structure, interacts with MAPK14 and 14-3-3 proteins. Phosphorylated by BRSK1 in vitro. Phosphorylated by CHEK1, which inhibits the activity of this protein. Phosphorylation at Ser-351 by AURKA might locally participate in the control of the onset of mitosis. Phosphorylation by MELK at Ser-167 promotes localization to the centrosome and the spindle poles during mitosis. Phosphorylation at Ser-321 and Ser-372 by MAPK14 is required for binding to 14-3-3 proteins. Expressed predominantly in spleen, lung, heart, brain, intestine, and muscle.

The protein localises to the cytoplasm. It localises to the cytoskeleton. The protein resides in the microtubule organizing center. Its subcellular location is the centrosome. It is found in the spindle pole. The enzyme catalyses O-phospho-L-tyrosyl-[protein] + H2O = L-tyrosyl-[protein] + phosphate. Stimulated by B-type cyclins. Tyrosine protein phosphatase which functions as a dosage-dependent inducer of mitotic progression. Directly dephosphorylates CDK1 and stimulates its kinase activity. Required for G2/M phases of the cell cycle progression and abscission during cytokinesis in a ECT2-dependent manner. The three isoforms seem to have a different level of activity. In Mus musculus (Mouse), this protein is M-phase inducer phosphatase 2 (Cdc25b).